A 282-amino-acid chain; its full sequence is AB hydrolase superfamily protein FGSG_00045 (282 aa).

A compositionally biased stretch (polar residues) spans 1-10 (MAPISSTRPS). Residues 1–22 (MAPISSTRPSHSIAADNPNPTT) are disordered. The region spanning 22-270 (TQVNFNTNMT…FADMVKRWII (249 aa)) is the AB hydrolase-1 domain.

The protein belongs to the AB hydrolase superfamily.

The protein operates within mycotoxin biosynthesis. Its function is as follows. AB hydrolase superfamily protein; part of the gene cluster that mediates the biosynthesis of gramillins A and B, bicyclic lipopeptides that induce cell death in maize leaves but not in wheat leaves. The nonribosomal peptide synthetase GRA1 incorporates respectively a glutamic adic (Glu), a leucine (Leu), a serine (Ser), a hydroxyglutamine (HOGln), a 2-amino decanoic acid, and 2 cysteins (CysB and CysA). The biosynthesis of 2-amino decanoic acid incorporated in gramillins could be initiated by a fatty acid synthase composed of the alpha and beta subunits FGSG_00036 and FGSG_11656. The cytochrome P450 monooxygenase FGSG_15680 could hydroxylate the fatty acid chain. Subsequent oxidation to the ketone by the oxidoreductase FGSG_00048 and transamination by aminotransferase FGSG_00049 could form 2-amino-decanoic acid. On the other hand, FGSG_15680 could also be responsible for the HO-modified glutamine at the gamma-position. Whether hydroxylation occurs on the fully assembled product or on the Gln residue prior to assembly into the gramillins requires further proof. The thioredoxin FGSG_00043 could also be required for the disulfide-bond formation between CysA and CysB. The specific involvement of the remaining proteins from the cluster is more difficult to discern, but could have broader regulatory (FGSG_00040 and FGSG_11657) or enzymatic functions (FGSG_00044 and FGSG_00045). The final C-domain of GRA1 does not possess the expected sequence of a termination CT domain, often implicated in macrocyclization and release of a cyclopeptidein fungal NRPs; and the thioesterase FGSG_00047 may act in concert with the terminal C-domain of GRA1 to catalyze the formation of the macrocyclic anhydride and release of the products. The sequence is that of AB hydrolase superfamily protein FGSG_00045 from Gibberella zeae (strain ATCC MYA-4620 / CBS 123657 / FGSC 9075 / NRRL 31084 / PH-1) (Wheat head blight fungus).